Reading from the N-terminus, the 285-residue chain is Putative quercetin 2,3-dioxygenase PA3240 (285 aa).

A divalent metal cation-binding residues include His-60, His-62, His-104, and Glu-106.

The protein belongs to the pirin family. A divalent metal cation serves as cofactor.

The catalysed reaction is quercetin + O2 = 2-(3,4-dihydroxybenzoyloxy)-4,6-dihydroxybenzoate + CO. Its pathway is flavonoid metabolism; quercetin degradation. Its function is as follows. Putative quercetin 2,3-dioxygenase. The sequence is that of Putative quercetin 2,3-dioxygenase PA3240 from Pseudomonas aeruginosa (strain ATCC 15692 / DSM 22644 / CIP 104116 / JCM 14847 / LMG 12228 / 1C / PRS 101 / PAO1).